Reading from the N-terminus, the 405-residue chain is Tryptophan synthase beta chain (405 aa).

K98 bears the N6-(pyridoxal phosphate)lysine mark.

It belongs to the TrpB family. Tetramer of two alpha and two beta chains. Pyridoxal 5'-phosphate is required as a cofactor.

The catalysed reaction is (1S,2R)-1-C-(indol-3-yl)glycerol 3-phosphate + L-serine = D-glyceraldehyde 3-phosphate + L-tryptophan + H2O. It functions in the pathway amino-acid biosynthesis; L-tryptophan biosynthesis; L-tryptophan from chorismate: step 5/5. In terms of biological role, the beta subunit is responsible for the synthesis of L-tryptophan from indole and L-serine. The sequence is that of Tryptophan synthase beta chain from Stenotrophomonas maltophilia (strain R551-3).